The following is a 522-amino-acid chain: Zinc finger and BTB domain-containing protein 18 (522 aa).

Residues 24-91 form the BTB domain; sequence CDCTVLVGDA…MYEGKLQFKD (68 aa). Over residues 121-143 the composition is skewed to basic and acidic residues; sequence ATTEADSTKKEEDASSCSDKVES. The interval 121–166 is disordered; sequence ATTEADSTKKEEDASSCSDKVESLSDGSSHMAGDLPSDEDEGEDDK. Ser-157 carries the phosphoserine modification. A Glycyl lysine isopeptide (Lys-Gly) (interchain with G-Cter in SUMO2) cross-link involves residue Lys-273. An interaction with DNMT3A region spans residues 310–427; it reads EPAHLAPLRE…TFSCMYTLKR (118 aa). C2H2-type zinc fingers lie at residues 370 to 392, 410 to 432, 438 to 460, and 466 to 489; these read FMCPLCNKVFPSPHILQIHLSTH, PTCSLCGKTFSCMYTLKRHERTH, YTCTQCGKSFQYSHNLSRHAVVH, and HACKWCERRFTQSGDLYRHIRKFH. Phosphoserine is present on residues Ser-516 and Ser-517.

It belongs to the krueppel C2H2-type zinc-finger protein family. ZBTB18 subfamily. In terms of assembly, interacts with DNMT3A.

It localises to the nucleus. Its function is as follows. Transcriptional repressor that plays a role in various developmental processes such as myogenesis and brain development. Specifically binds the consensus DNA sequence 5'-[AC]ACATCTG[GT][AC]-3' which contains the E box core, and acts by recruiting chromatin remodeling multiprotein complexes. Plays a key role in myogenesis by directly repressing the expression of ID2 and ID3, 2 inhibitors of skeletal myogenesis. Also involved in controlling cell division of progenitor cells and regulating the survival of postmitotic cortical neurons. May also play a role in the organization of chromosomes in the nucleus. The chain is Zinc finger and BTB domain-containing protein 18 (Zbtb18) from Rattus norvegicus (Rat).